The sequence spans 91 residues: Methanol dehydrogenase [cytochrome c] subunit 2 (91 aa).

The N-terminal stretch at 1–22 (MKHVLTLLALASVFAVSNQALA) is a signal peptide. Cysteines 28 and 34 form a disulfide.

This sequence belongs to the methanol dehydrogenase subunit 2 family. In terms of assembly, heterotetramer composed of 2 alpha and 2 beta subunits.

It localises to the cell inner membrane. The catalysed reaction is 2 Fe(III)-[cytochrome cL] + a primary alcohol = 2 Fe(II)-[cytochrome cL] + an aldehyde + 2 H(+). Its function is as follows. Catalyzes the oxidation of primary alcohols including methanol. In Methylophilus methylotrophus (Bacterium W3A1), this protein is Methanol dehydrogenase [cytochrome c] subunit 2 (moxI).